The sequence spans 355 residues: MFPSLQSFAKKVLARHHVSIDYHYILKHCGLWWYKAPISLDCKHMLIKLPSFADGLDLNTALMLATKENNYQLIKLFTEWGADINYGLICANTPPVREFCWELGAKYQVDKNKVMHMFFKLIHHGTTSSNIILCLKLFNNNPFPTYVIIREIKSSIYWKLRRLVEDTDILSNMSDDDMLTIYCFILALQDNLREAISYFYQHFKHLNTWWLICALCFNKLFDLHDLYEKEKIRMDMDEMMCIACTKDNNFLTIYYCFLLGANINQAMLACVQFYNMDNLFFCIDLGADAFEEAKALADQRNYFLMYHRLSIDIYSPDSSLLTLKEADPKKIYHLLKNYKSKNMMVYFDYDGHDTV.

One copy of the ANK repeat lies at 57–89 (DLNTALMLATKENNYQLIKLFTEWGADINYGLI).

This sequence belongs to the asfivirus MGF 360 family.

Its function is as follows. Plays a role in virus cell tropism, and may be required for efficient virus replication in macrophages. The sequence is that of Protein MGF 360-10L from African swine fever virus (isolate Tick/Malawi/Lil 20-1/1983) (ASFV).